Here is a 977-residue protein sequence, read N- to C-terminus: Macrophage colony-stimulating factor 1 receptor (977 aa).

The signal sequence occupies residues 1-19 (MELGPPLVLLLATVWHGQG). At 20–515 (APVIEPSGPE…QLPDESLFTP (496 aa)) the chain is on the extracellular side. Ig-like C2-type domains lie at 24-104 (EPSG…VKDP), 107-197 (SWNL…KVNR), 204-298 (QIKL…VVES), 299-397 (AYLN…LTLR), and 398-503 (YPPE…SLGQ). 3 cysteine pairs are disulfide-bonded: Cys-42-Cys-84, Cys-127-Cys-177, and Cys-224-Cys-278. 2 N-linked (GlcNAc...) asparagine glycosylation sites follow: Asn-45 and Asn-73. Residues Asn-302, Asn-335, Asn-389, Asn-410, Asn-449, Asn-478, and Asn-491 are each glycosylated (N-linked (GlcNAc...) asparagine). Cysteines 417 and 483 form a disulfide. The helical transmembrane segment at 516 to 536 (VVVACMSVMSLLVLLLLLLLY) threads the bilayer. Over 537–977 (KYKQKPKYQV…LLQPNNYQFC (441 aa)) the chain is Cytoplasmic. Residues 540–572 (QKPKYQVRWKIIERYEGNSYTFIDPTQLPYNEK) are regulatory juxtamembrane domain. A phosphotyrosine; by autocatalysis mark is found at Tyr-544 and Tyr-559. In terms of domain architecture, Protein kinase spans 580–913 (LQFGKTLGAG…ICFLLQEQAR (334 aa)). ATP contacts are provided by residues 586–594 (LGAGAFGKV) and Lys-614. A phosphotyrosine; by autocatalysis mark is found at Tyr-697 and Tyr-706. The residue at position 711 (Ser-711) is a Phosphoserine. Tyr-721 carries the phosphotyrosine; by autocatalysis modification. Residue Asp-776 is the Proton acceptor of the active site. The interval 794–816 (DFGLARDIMNDSNYVVKGNARLP) is activation loop. Residues Tyr-807 and Tyr-921 each carry the phosphotyrosine; by autocatalysis modification. The interval 921–957 (YANLPSSGGSSGSDSGGGSSGGSSSEPEEESSSEHLA) is disordered. A compositionally biased stretch (gly residues) spans 929–941 (GSSGSDSGGGSSG). A Phosphotyrosine; by autocatalysis modification is found at Tyr-974.

Belongs to the protein kinase superfamily. Tyr protein kinase family. CSF-1/PDGF receptor subfamily. As to quaternary structure, monomer. Homodimer. Interacts with CSF1 and IL34. Interaction with dimeric CSF1 or IL34 leads to receptor homodimerization. Interacts with INPPL1/SHIP2 and THOC5. Interacts (tyrosine phosphorylated) with PLCG2 (via SH2 domain). Interacts (tyrosine phosphorylated) with PIK3R1 (via SH2 domain). Interacts (tyrosine phosphorylated) with FYN, YES1 and SRC (via SH2 domain). Interacts (tyrosine phosphorylated) with CBL, GRB2 and SLA2. Post-translationally, autophosphorylated in response to CSF1 or IL34 binding. Phosphorylation at Tyr-559 is important for normal down-regulation of signaling by ubiquitination, internalization and degradation. Phosphorylation at Tyr-559 and Tyr-807 is important for interaction with SRC family members, including FYN, YES1 and SRC, and for subsequent activation of these protein kinases. Phosphorylation at Tyr-697 and Tyr-921 is important for interaction with GRB2. Phosphorylation at Tyr-721 is important for interaction with PIK3R1. Phosphorylation at Tyr-721 and Tyr-807 is important for interaction with PLCG2. Phosphorylation at Tyr-974 is important for interaction with CBL. Dephosphorylation by PTPN2 negatively regulates downstream signaling and macrophage differentiation. In terms of processing, ubiquitinated. Becomes rapidly polyubiquitinated after autophosphorylation, leading to its degradation. In terms of tissue distribution, widely expressed.

It localises to the cell membrane. It catalyses the reaction L-tyrosyl-[protein] + ATP = O-phospho-L-tyrosyl-[protein] + ADP + H(+). With respect to regulation, present in an inactive conformation in the absence of bound ligand. CSF1 or IL34 binding leads to dimerization and activation by autophosphorylation on tyrosine residues. Inhibited by imatinib/STI-571 (Gleevec), dasatinib, sunitinib/SU11248, lestaurtinib/CEP-701, midostaurin/PKC-412, Ki20227, linifanib/ABT-869, Axitinib/AG013736, sorafenib/BAY 43-9006 and GW2580. Its function is as follows. Tyrosine-protein kinase that acts as a cell-surface receptor for CSF1 and IL34 and plays an essential role in the regulation of survival, proliferation and differentiation of hematopoietic precursor cells, especially mononuclear phagocytes, such as macrophages and monocytes. Promotes the release of pro-inflammatory chemokines in response to IL34 and CSF1, and thereby plays an important role in innate immunity and in inflammatory processes. Plays an important role in the regulation of osteoclast proliferation and differentiation, the regulation of bone resorption, and is required for normal bone and tooth development. Required for normal male and female fertility, and for normal development of milk ducts and acinar structures in the mammary gland during pregnancy. Promotes reorganization of the actin cytoskeleton, regulates formation of membrane ruffles, cell adhesion and cell migration, and promotes cancer cell invasion. Activates several signaling pathways in response to ligand binding, including the ERK1/2 and the JNK pathway. Phosphorylates PIK3R1, PLCG2, GRB2, SLA2 and CBL. Activation of PLCG2 leads to the production of the cellular signaling molecules diacylglycerol and inositol 1,4,5-trisphosphate, that then lead to the activation of protein kinase C family members, especially PRKCD. Phosphorylation of PIK3R1, the regulatory subunit of phosphatidylinositol 3-kinase, leads to activation of the AKT1 signaling pathway. Activated CSF1R also mediates activation of the MAP kinases MAPK1/ERK2 and/or MAPK3/ERK1, and of the SRC family kinases SRC, FYN and YES1. Activated CSF1R transmits signals both via proteins that directly interact with phosphorylated tyrosine residues in its intracellular domain, or via adapter proteins, such as GRB2. Promotes activation of STAT family members STAT3, STAT5A and/or STAT5B. Promotes tyrosine phosphorylation of SHC1 and INPP5D/SHIP-1. Receptor signaling is down-regulated by protein phosphatases, such as INPP5D/SHIP-1, that dephosphorylate the receptor and its downstream effectors, and by rapid internalization of the activated receptor. In the central nervous system, may play a role in the development of microglia macrophages. The sequence is that of Macrophage colony-stimulating factor 1 receptor (Csf1r) from Mus musculus (Mouse).